The chain runs to 341 residues: THO complex subunit 6 (341 aa).

7 WD repeats span residues 22 to 61 (RLHMTIFSQSVSPCGKFLAAGNNYGQIAIFSLSSALSSEA), 74 to 112 (AHDGPVYSMVSTDRHLLSAGDGEVKAWLWAEMLKKGCKE), 124 to 165 (LEVP…RVLR), 166 to 205 (GHTDYIHCLALRERSPEVLSGGEDGAVRLWDLRTAKEVQT), 215 to 254 (SRPHNGRWIGCLATDSDWMVCGGGPALTLWHLRSSTPTTI), 256 to 293 (PIRAPQKHVTFYQDLILSAGQGRCVNQWQLSGELKAQV), and 295 to 339 (GSSP…AFSL). Phosphoserine is present on Ser180.

It belongs to the WD repeat THOC6 family. As to quaternary structure, component of the THO subcomplex, which is composed of THOC1, THOC2, THOC3, THOC5, THOC6 and THOC7. The THO subcomplex interacts with DDX39B to form the THO-DDX39B complex which multimerizes into a 28-subunit tetrameric assembly. Component of the transcription/export (TREX) complex at least composed of ALYREF/THOC4, DDX39B, SARNP/CIP29, CHTOP and the THO subcomplex; in the complex interacts with THOC5; together with THOC5 and THOC7, plays a key structural role in the oligomerization of the THO-DDX39B complex. TREX seems to have a dynamic structure involving ATP-dependent remodeling.

It localises to the nucleus. The protein resides in the nucleus speckle. Its function is as follows. Component of the THO subcomplex of the TREX complex which is thought to couple mRNA transcription, processing and nuclear export, and which specifically associates with spliced mRNA and not with unspliced pre-mRNA. Plays a key structural role in the oligomerization of the THO-DDX39B complex. TREX is recruited to spliced mRNAs by a transcription-independent mechanism, binds to mRNA upstream of the exon-junction complex (EJC) and is recruited in a splicing- and cap-dependent manner to a region near the 5' end of the mRNA where it functions in mRNA export to the cytoplasm via the TAP/NXF1 pathway. Plays a role in apoptosis negative control involved in brain development. In terms of biological role, (Microbial infection) The TREX complex is essential for the export of Kaposi's sarcoma-associated herpesvirus (KSHV) intronless mRNAs and infectious virus production. This is THO complex subunit 6 (THOC6) from Homo sapiens (Human).